The primary structure comprises 500 residues: 4-aminobutyrate aminotransferase, mitochondrial (500 aa).

The N-terminal 28 residues, 1–28 (MASMLLAQRLACSFQHSYRLLVPGSRHI), are a transit peptide targeting the mitochondrion. [2Fe-2S] cluster is bound at residue C163. A pyridoxal 5'-phosphate-binding site is contributed by 164-165 (GS). C166 provides a ligand contact to [2Fe-2S] cluster. Residue R220 participates in substrate binding. K231 is modified (N6-succinyllysine). K252 is modified (N6-acetyllysine; alternate). An N6-succinyllysine; alternate modification is found at K252. 2 positions are modified to N6-acetyllysine: K279 and K318. K357 carries the N6-(pyridoxal phosphate)lysine modification. T381 provides a ligand contact to pyridoxal 5'-phosphate. K413 bears the N6-acetyllysine; alternate mark. K413 is modified (N6-succinyllysine; alternate). An N6-acetyllysine mark is found at K452 and K470.

The protein belongs to the class-III pyridoxal-phosphate-dependent aminotransferase family. As to quaternary structure, homodimer; disulfide-linked. It depends on pyridoxal 5'-phosphate as a cofactor. [2Fe-2S] cluster is required as a cofactor. In terms of tissue distribution, liver &gt; pancreas &gt; brain &gt; kidney &gt; heart &gt; placenta.

The protein resides in the mitochondrion matrix. It carries out the reaction 4-aminobutanoate + 2-oxoglutarate = succinate semialdehyde + L-glutamate. The enzyme catalyses (S)-3-amino-2-methylpropanoate + 2-oxoglutarate = 2-methyl-3-oxopropanoate + L-glutamate. Functionally, catalyzes the conversion of gamma-aminobutyrate and L-beta-aminoisobutyrate to succinate semialdehyde and methylmalonate semialdehyde, respectively. Can also convert delta-aminovalerate and beta-alanine. In Homo sapiens (Human), this protein is 4-aminobutyrate aminotransferase, mitochondrial.